We begin with the raw amino-acid sequence, 1083 residues long: Ubiquitin-protein ligase E3C (1083 aa).

2 stretches are compositionally biased toward basic and acidic residues: residues 1–10 (MFSFEGDFKT) and 20–40 (SRKE…RKRE). Residues 1 to 40 (MFSFEGDFKTRPKVSLGGASRKEEKASLLHRTQEERRKRE) are disordered. The cis-determinant of acceptor ubiquitin-binding stretch occupies residues 1-60 (MFSFEGDFKTRPKVSLGGASRKEEKASLLHRTQEERRKREEERRRLKNAVIIQSFIRGYR). One can recognise an IQ domain in the interval 45 to 74 (RLKNAVIIQSFIRGYRDRKQQYFIQRSAFD). A disordered region spans residues 354–386 (ASPTGTGCPDSTSDSEDDNEETDQPNSPEDGRV). A compositionally biased stretch (acidic residues) spans 366–376 (SDSEDDNEETD). Positions 744–1083 (NEPDLKKRIR…IECAAGFELS (340 aa)) constitute an HECT domain. K903 participates in a covalent cross-link: Glycyl lysine isopeptide (Lys-Gly) (interchain with G-Cter in ubiquitin); by autocatalysis. The Glycyl thioester intermediate role is filled by C1051.

It belongs to the UBE3C family. As to quaternary structure, interacts with 26S proteasomes. Interacts (via the HECT domain) with UBE2D1 and, less efficiently, with UBE2L3. Autoubiquitinated; promoting its own degradation.

The enzyme catalyses S-ubiquitinyl-[E2 ubiquitin-conjugating enzyme]-L-cysteine + [acceptor protein]-L-lysine = [E2 ubiquitin-conjugating enzyme]-L-cysteine + N(6)-ubiquitinyl-[acceptor protein]-L-lysine.. The protein operates within protein modification; protein ubiquitination. E3 ubiquitin-protein ligase that specifically catalyzes 'Lys-29'- and 'Lys-48'-linked polyubiquitin chains. Accepts ubiquitin from the E2 ubiquitin-conjugating enzyme UBE2D1 in the form of a thioester and then directly transfers the ubiquitin to targeted substrates. Associates with the proteasome and promotes elongation of ubiquitin chains on substrates bound to the 26S proteasome. Also catalyzes 'Lys-29'- and 'Lys-48'-linked ubiquitination of 26S proteasome subunit ADRM1/RPN13 in response to proteotoxic stress, impairing the ability of the proteasome to bind and degrade ubiquitin-conjugated proteins. Acts as a negative regulator of autophagy by mediating 'Lys-29'- and 'Lys-48'-linked ubiquitination of PIK3C3/VPS34, promoting its degradation. Can assemble unanchored poly-ubiquitin chains in either 'Lys-29'- or 'Lys-48'-linked polyubiquitin chains; with some preference for 'Lys-48' linkages. Acts as a negative regulator of type I interferon by mediating 'Lys-48'-linked ubiquitination of IRF3 and IRF7, leading to their degradation by the proteasome. Catalyzes ubiquitination and degradation of CAND2. This Mus musculus (Mouse) protein is Ubiquitin-protein ligase E3C.